A 944-amino-acid polypeptide reads, in one-letter code: UvrABC system protein A (944 aa).

Position 31-38 (Gly-31–Ser-38) interacts with ATP. The C4-type zinc-finger motif lies at Cys-253–Cys-280. ABC transporter domains lie at Trp-309–Leu-586 and Arg-606–Lys-936. Gly-639–Ser-646 is an ATP binding site. The C4-type zinc-finger motif lies at Cys-739–Cys-765.

This sequence belongs to the ABC transporter superfamily. UvrA family. In terms of assembly, forms a heterotetramer with UvrB during the search for lesions.

It is found in the cytoplasm. Its function is as follows. The UvrABC repair system catalyzes the recognition and processing of DNA lesions. UvrA is an ATPase and a DNA-binding protein. A damage recognition complex composed of 2 UvrA and 2 UvrB subunits scans DNA for abnormalities. When the presence of a lesion has been verified by UvrB, the UvrA molecules dissociate. In Pseudomonas putida (strain ATCC 47054 / DSM 6125 / CFBP 8728 / NCIMB 11950 / KT2440), this protein is UvrABC system protein A.